Consider the following 390-residue polypeptide: Chitinase-3-like protein 2 (390 aa).

Residues 1-26 (MGATTMDQKSLWAGVVVLLLLQGGSA) form the signal peptide. Residues 27 to 390 (YKLVCYFTNW…QAVKRSLGSL (364 aa)) enclose the GH18 domain. C31 and C56 are disulfide-bonded. N-linked (GlcNAc...) asparagine glycosylation is present at N35. Chitin is bound by residues 75–76 (DK), 102–105 (GGYL), Y104, Y146, 210–213 (LSFD), D213, and W360.

This sequence belongs to the glycosyl hydrolase 18 family. In terms of tissue distribution, highest expression in chondrocytes, followed by synoviocytes, lung and heart. Not detected in spleen, pancreas, and liver. May also be expressed in developing brain and placenta.

The protein resides in the secreted. Its function is as follows. Lectin that binds chitooligosaccharides and other glycans with high affinity, but not heparin. Has no chitinase activity. In Homo sapiens (Human), this protein is Chitinase-3-like protein 2 (CHI3L2).